The following is a 522-amino-acid chain: Ribonuclease Y (522 aa).

Residues 7 to 27 (STILYCLFFFFLGIAAVLAFI) form a helical membrane-spanning segment. The KH domain maps to 212–272 (TTSTVGVPTD…VRREVARMSL (61 aa)). One can recognise an HD domain in the interval 338–431 (VLRHSVEVAF…VATADACSAS (94 aa)).

Belongs to the RNase Y family.

Its subcellular location is the cell membrane. Endoribonuclease that initiates mRNA decay. This is Ribonuclease Y from Rhodopirellula baltica (strain DSM 10527 / NCIMB 13988 / SH1).